Here is a 424-residue protein sequence, read N- to C-terminus: Serine--tRNA ligase (424 aa).

An L-serine-binding site is contributed by 230–232 (TSE). ATP-binding positions include 261 to 263 (RKE) and Val277. An L-serine-binding site is contributed by Glu284. 348–351 (ELTS) provides a ligand contact to ATP. L-serine is bound at residue Thr382.

It belongs to the class-II aminoacyl-tRNA synthetase family. Type-1 seryl-tRNA synthetase subfamily. Homodimer. The tRNA molecule binds across the dimer.

The protein resides in the cytoplasm. It carries out the reaction tRNA(Ser) + L-serine + ATP = L-seryl-tRNA(Ser) + AMP + diphosphate + H(+). It catalyses the reaction tRNA(Sec) + L-serine + ATP = L-seryl-tRNA(Sec) + AMP + diphosphate + H(+). It participates in aminoacyl-tRNA biosynthesis; selenocysteinyl-tRNA(Sec) biosynthesis; L-seryl-tRNA(Sec) from L-serine and tRNA(Sec): step 1/1. In terms of biological role, catalyzes the attachment of serine to tRNA(Ser). Is also able to aminoacylate tRNA(Sec) with serine, to form the misacylated tRNA L-seryl-tRNA(Sec), which will be further converted into selenocysteinyl-tRNA(Sec). The sequence is that of Serine--tRNA ligase from Nocardioides sp. (strain ATCC BAA-499 / JS614).